The sequence spans 453 residues: Serine/threonine-protein phosphatase 2A regulatory subunit B'' subunit gamma (453 aa).

EF-hand domains lie at 273–308 (PSAL…TMTN) and 341–376 (KEPA…IQEL). The Ca(2+) site is built by Asp-286, Asp-288, Asn-290, Met-292, and Glu-297.

Interacts with MCM3AP/GANP, PPP5C, and the phosphatase 2A core enzyme composed of the PPP2CA catalytic subunit and the constant regulatory subunit PPP2R1A. Finds in a complex with ABCB1, TFPI2 and PPP2R3C; leading to the dephosphorylation of ABCB1. As to expression, expressed in all tissues tested including heart, brain, spleen, thymus, lung, liver, kidney and testis.

The protein localises to the nucleus. It is found in the cytoplasm. May regulate MCM3AP phosphorylation through phosphatase recruitment. May act as a negative regulator of ABCB1 expression and function through the dephosphorylation of ABCB1 by TFPI2/PPP2R3C complex. May play a role in the activation-induced cell death of B-cells. In Mus musculus (Mouse), this protein is Serine/threonine-protein phosphatase 2A regulatory subunit B'' subunit gamma (Ppp2r3c).